A 432-amino-acid chain; its full sequence is Trigger factor (432 aa).

Residues 161 to 246 (GKRVSIDFVG…VNKVEARQLP (86 aa)) form the PPIase FKBP-type domain.

This sequence belongs to the FKBP-type PPIase family. Tig subfamily.

The protein resides in the cytoplasm. It carries out the reaction [protein]-peptidylproline (omega=180) = [protein]-peptidylproline (omega=0). Its function is as follows. Involved in protein export. Acts as a chaperone by maintaining the newly synthesized protein in an open conformation. Functions as a peptidyl-prolyl cis-trans isomerase. This Vibrio vulnificus (strain YJ016) protein is Trigger factor.